A 219-amino-acid chain; its full sequence is ATP synthase subunit a (219 aa).

6 consecutive transmembrane segments (helical) span residues 16-36 (LSNWLSMLIPLLFMVMSFWLI), 57-79 (LLMGPASFGANILVIALFLFILF), 96-116 (LAVTLSLAVPLWISFILYTWI), 122-142 (ALAHLVPLGTPAPLMPFMVLM), 158-178 (LAANMIAGHLLLTLLGAQGTL), and 184-204 (TSIVVFSQIILLMLEFSVAII).

The protein belongs to the ATPase A chain family. F-type ATPases have 2 components, CF(1) - the catalytic core - and CF(0) - the membrane proton channel. CF(1) has five subunits: alpha(3), beta(3), gamma(1), delta(1), epsilon(1). CF(0) has three main subunits: a, b and c.

It localises to the mitochondrion inner membrane. Its function is as follows. Mitochondrial membrane ATP synthase (F(1)F(0) ATP synthase or Complex V) produces ATP from ADP in the presence of a proton gradient across the membrane which is generated by electron transport complexes of the respiratory chain. F-type ATPases consist of two structural domains, F(1) - containing the extramembraneous catalytic core and F(0) - containing the membrane proton channel, linked together by a central stalk and a peripheral stalk. During catalysis, ATP synthesis in the catalytic domain of F(1) is coupled via a rotary mechanism of the central stalk subunits to proton translocation. Key component of the proton channel; it may play a direct role in the translocation of protons across the membrane. The sequence is that of ATP synthase subunit a (ATP6) from Artemia franciscana (Brine shrimp).